The following is an 89-amino-acid chain: UPF0223 protein BCE_4008 (89 aa).

The protein belongs to the UPF0223 family.

This chain is UPF0223 protein BCE_4008, found in Bacillus cereus (strain ATCC 10987 / NRS 248).